We begin with the raw amino-acid sequence, 435 residues long: Probable xyloglucan galactosyltransferase GT19 (435 aa).

At 1–6 (MASKST) the chain is on the cytoplasmic side. The chain crosses the membrane as a helical; Signal-anchor for type II membrane protein span at residues 7-23 (VTTLTIFFFFFFFFIEP). Topologically, residues 24-435 (KVQSQQISAV…GVLDRIISRV (412 aa)) are lumenal. N140, N203, and N277 each carry an N-linked (GlcNAc...) asparagine glycan.

Belongs to the glycosyltransferase 47 family. In terms of tissue distribution, expressed in roots, hypocotyls, cotyledons, leaves, stems, stamens and pollen grains.

It is found in the golgi apparatus membrane. In terms of biological role, functions in xyloglucan synthesis by adding side chains to the xylosylated glucan backbone. Involved in the galactosylation of hemicellulose xyloglucan. The polypeptide is Probable xyloglucan galactosyltransferase GT19 (Arabidopsis thaliana (Mouse-ear cress)).